A 373-amino-acid polypeptide reads, in one-letter code: Indole glucosinolate O-methyltransferase 3 (373 aa).

The S-adenosyl-L-homocysteine site is built by Gly-217, Asp-240, Asp-260, Met-261, and Lys-274. His-278 serves as the catalytic Proton acceptor.

This sequence belongs to the class I-like SAM-binding methyltransferase superfamily. Cation-independent O-methyltransferase family.

Its pathway is secondary metabolite biosynthesis. Its function is as follows. Involved in indole glucosinolate biosynthesis. Catalyzes methoxylation reactions of the glucosinolate indole ring. Converts the hydroxy intermediates 4-hydroxy-indol-3-yl-methylglucosinolate (4OH-I3M) and 1-hydroxy-indol-3-yl-methylglucosinolate (1OH-I3M) to 4-methoxy-indol-3-yl-methylglucosinolate (4MO-I3M) and 1-methoxy-indol-3-yl-methylglucosinolate(1MO-I3M), respectively. The polypeptide is Indole glucosinolate O-methyltransferase 3 (Arabidopsis thaliana (Mouse-ear cress)).